Consider the following 239-residue polypeptide: Tetrahydromethanopterin S-methyltransferase subunit A (239 aa).

Topologically, residues 1–215 (MADKKAPAAG…EAAMIAKFNS (215 aa)) are cytoplasmic. His-85 is a binding site for 5-hydroxybenzimidazolylcob(I)amide. Residues 216-238 (GYYNGKIQGIAIGLFLSIVIFSL) form a helical membrane-spanning segment. Residue Leu-239 is a topological domain, extracellular.

It belongs to the MtrA family. The complex is composed of 8 subunits; MtrA, MtrB, MtrC, MtrD, MtrE, MtrF, MtrG and MtrH. 5-hydroxybenzimidazolylcob(I)amide is required as a cofactor.

It localises to the cell membrane. The enzyme catalyses 5-methyl-5,6,7,8-tetrahydromethanopterin + coenzyme M + 2 Na(+)(in) = 5,6,7,8-tetrahydromethanopterin + methyl-coenzyme M + 2 Na(+)(out). The protein operates within one-carbon metabolism; methanogenesis from CO(2); methyl-coenzyme M from 5,10-methylene-5,6,7,8-tetrahydromethanopterin: step 2/2. In terms of biological role, part of a complex that catalyzes the formation of methyl-coenzyme M and tetrahydromethanopterin from coenzyme M and methyl-tetrahydromethanopterin. This is an energy-conserving, sodium-ion translocating step. This chain is Tetrahydromethanopterin S-methyltransferase subunit A, found in Methanococcus maripaludis (strain DSM 14266 / JCM 13030 / NBRC 101832 / S2 / LL).